Here is a 244-residue protein sequence, read N- to C-terminus: DNA repair protein RecO (244 aa).

The protein belongs to the RecO family.

In terms of biological role, involved in DNA repair and RecF pathway recombination. The chain is DNA repair protein RecO from Nocardioides sp. (strain ATCC BAA-499 / JS614).